The primary structure comprises 779 residues: Probable ATP-dependent RNA helicase DHX40 (779 aa).

Residues 1-53 (MSRFPAVAGRAPRRQEEGERPVELQEERPSAVRIADREEKGCTSQEGGTTPTF) are disordered. Over residues 13–41 (RRQEEGERPVELQEERPSAVRIADREEKG) the composition is skewed to basic and acidic residues. Residues 42 to 53 (CTSQEGGTTPTF) are compositionally biased toward polar residues. Positions 63–231 (IQAVRDNSFL…FGNCPIFDIP (169 aa)) constitute a Helicase ATP-binding domain. ATP is bound at residue 76–83 (GNTGSGKT). The DEAH box motif lies at 173–176 (DEAH). Residues 263 to 442 (TMDIHLNEMA…SVVLTLKCLA (180 aa)) form the Helicase C-terminal domain.

The protein belongs to the DEAD box helicase family. DEAH subfamily.

The catalysed reaction is ATP + H2O = ADP + phosphate + H(+). Its function is as follows. Probable ATP-dependent RNA helicase. The protein is Probable ATP-dependent RNA helicase DHX40 (Dhx40) of Rattus norvegicus (Rat).